The primary structure comprises 280 residues: L-proline cis-4-hydroxylase (280 aa).

3 residues coordinate Fe cation: H106, D108, and H154. A 2-oxoglutarate-binding site is contributed by R164.

The protein belongs to the L-proline cis-4-/cis-3-hydroxylase family. Fe(2+) serves as cofactor.

The catalysed reaction is L-proline + 2-oxoglutarate + O2 = cis-4-hydroxy-L-proline + succinate + CO2. Its activity is regulated as follows. Inhibited by metal ions such as Co(2+), Zn(2+), Cu(2+) or Ni(2+). Is also inhibited by EDTA or diethylpyrocarbonate (DEPC) in vitro. Unlike the procollagen-proline cis-3- and trans-4-hydroxylases from mammals, does not necessarily require L-ascorbate for activity although it does increase the activity of the enzyme. Functionally, dioxygenase that catalyzes the 2-oxoglutarate-dependent selective hydroxylation of free L-proline to cis-4-hydroxy-L-proline (cis-4-Hyp). The polypeptide is L-proline cis-4-hydroxylase (Mesorhizobium japonicum (strain LMG 29417 / CECT 9101 / MAFF 303099) (Mesorhizobium loti (strain MAFF 303099))).